Consider the following 216-residue polypeptide: 3-keto-L-gulonate-6-phosphate decarboxylase UlaD (216 aa).

Asp11 is a substrate binding site. Mg(2+)-binding residues include Glu33 and Asp62. Arg192 serves as a coordination point for substrate.

The protein belongs to the HPS/KGPDC family. KGPDC subfamily. As to quaternary structure, homodimer. The cofactor is Mg(2+).

It carries out the reaction 3-dehydro-L-gulonate 6-phosphate + H(+) = L-xylulose 5-phosphate + CO2. The protein operates within cofactor degradation; L-ascorbate degradation; D-xylulose 5-phosphate from L-ascorbate: step 2/4. Catalyzes the decarboxylation of 3-keto-L-gulonate-6-P into L-xylulose-5-P. Is involved in the anaerobic L-ascorbate utilization. In Escherichia coli O17:K52:H18 (strain UMN026 / ExPEC), this protein is 3-keto-L-gulonate-6-phosphate decarboxylase UlaD.